A 430-amino-acid chain; its full sequence is Trigger factor (430 aa).

In terms of domain architecture, PPIase FKBP-type spans 163–248; that stretch reads GDTVVFDFAG…IHEIKAQELP (86 aa).

The protein belongs to the FKBP-type PPIase family. Tig subfamily.

It is found in the cytoplasm. The catalysed reaction is [protein]-peptidylproline (omega=180) = [protein]-peptidylproline (omega=0). Functionally, involved in protein export. Acts as a chaperone by maintaining the newly synthesized protein in an open conformation. Functions as a peptidyl-prolyl cis-trans isomerase. This chain is Trigger factor, found in Exiguobacterium sibiricum (strain DSM 17290 / CCUG 55495 / CIP 109462 / JCM 13490 / 255-15).